The primary structure comprises 155 residues: Large ribosomal subunit protein uL22 (155 aa).

A disordered region spans residues 109–155 (HITVIVESRPPKKAGKQGASASAARARRAQASKAATKKATDSKEGSE). Basic and acidic residues predominate over residues 146-155 (KATDSKEGSE).

It belongs to the universal ribosomal protein uL22 family. As to quaternary structure, part of the 50S ribosomal subunit.

This protein binds specifically to 23S rRNA; its binding is stimulated by other ribosomal proteins, e.g. L4, L17, and L20. It is important during the early stages of 50S assembly. It makes multiple contacts with different domains of the 23S rRNA in the assembled 50S subunit and ribosome. Functionally, the globular domain of the protein is located near the polypeptide exit tunnel on the outside of the subunit, while an extended beta-hairpin is found that lines the wall of the exit tunnel in the center of the 70S ribosome. In Mycolicibacterium vanbaalenii (strain DSM 7251 / JCM 13017 / BCRC 16820 / KCTC 9966 / NRRL B-24157 / PYR-1) (Mycobacterium vanbaalenii), this protein is Large ribosomal subunit protein uL22.